We begin with the raw amino-acid sequence, 466 residues long: mRNA-capping enzyme subunit alpha (466 aa).

The active-site N6-GMP-lysine intermediate is lysine 67. Residues arginine 408–isoleucine 466 are disordered. The segment covering lysine 413–glutamine 443 has biased composition (polar residues). A compositionally biased stretch (acidic residues) spans aspartate 448–proline 459.

Belongs to the eukaryotic GTase family. In terms of assembly, heterodimer. The mRNA-capping enzyme is composed of two separate chains alpha and beta, respectively a mRNA guanylyltransferase and an mRNA 5'-triphosphate monophosphatase.

Its subcellular location is the nucleus. It catalyses the reaction a 5'-end diphospho-ribonucleoside in mRNA + GTP + H(+) = a 5'-end (5'-triphosphoguanosine)-ribonucleoside in mRNA + diphosphate. Its function is as follows. Second step of mRNA capping. Transfer of the GMP moiety of GTP to the 5'-end of RNA via an enzyme-GMP covalent reaction intermediate. This is mRNA-capping enzyme subunit alpha (CEG1) from Kluyveromyces lactis (strain ATCC 8585 / CBS 2359 / DSM 70799 / NBRC 1267 / NRRL Y-1140 / WM37) (Yeast).